Reading from the N-terminus, the 402-residue chain is F-box/kelch-repeat protein At4g39590 (402 aa).

The segment covering 1 to 14 (MFPMSSTSRSSAAN) has biased composition (low complexity). The interval 1–37 (MFPMSSTSRSSAANNRKDPPRKKNKETPSPVTREPTS) is disordered. A compositionally biased stretch (polar residues) spans 27–37 (TPSPVTREPTS). The F-box domain maps to 35-81 (PTSIDSLPNDLLLNCFARVSRMYYPALSRVSKRFRSIVTSPEIYNTR). Kelch repeat units lie at residues 143 to 198 (NIYR…VVDG), 199 to 246 (KIYV…YRRA), 255 to 300 (KLYL…LFYW), and 302 to 341 (QGVF…DLGG).

The protein is F-box/kelch-repeat protein At4g39590 of Arabidopsis thaliana (Mouse-ear cress).